The sequence spans 262 residues: Malonyl-[acyl-carrier protein] O-methyltransferase (262 aa).

The protein belongs to the methyltransferase superfamily.

The catalysed reaction is malonyl-[ACP] + S-adenosyl-L-methionine = malonyl-[ACP] methyl ester + S-adenosyl-L-homocysteine. The protein operates within cofactor biosynthesis; biotin biosynthesis. Functionally, converts the free carboxyl group of a malonyl-thioester to its methyl ester by transfer of a methyl group from S-adenosyl-L-methionine (SAM). It allows to synthesize pimeloyl-ACP via the fatty acid synthetic pathway. The sequence is that of Malonyl-[acyl-carrier protein] O-methyltransferase from Dechloromonas aromatica (strain RCB).